Reading from the N-terminus, the 253-residue chain is 5'/3'-nucleotidase SurE (253 aa).

Positions 8, 9, 39, and 92 each coordinate a divalent metal cation.

The protein belongs to the SurE nucleotidase family. A divalent metal cation is required as a cofactor.

The protein localises to the cytoplasm. It carries out the reaction a ribonucleoside 5'-phosphate + H2O = a ribonucleoside + phosphate. The catalysed reaction is a ribonucleoside 3'-phosphate + H2O = a ribonucleoside + phosphate. The enzyme catalyses [phosphate](n) + H2O = [phosphate](n-1) + phosphate + H(+). Nucleotidase with a broad substrate specificity as it can dephosphorylate various ribo- and deoxyribonucleoside 5'-monophosphates and ribonucleoside 3'-monophosphates with highest affinity to 3'-AMP. Also hydrolyzes polyphosphate (exopolyphosphatase activity) with the preference for short-chain-length substrates (P20-25). Might be involved in the regulation of dNTP and NTP pools, and in the turnover of 3'-mononucleotides produced by numerous intracellular RNases (T1, T2, and F) during the degradation of various RNAs. This Salmonella arizonae (strain ATCC BAA-731 / CDC346-86 / RSK2980) protein is 5'/3'-nucleotidase SurE.